The following is a 140-amino-acid chain: DegV domain-containing 15.5 kDa protein (140 aa).

Residues 4 to 140 (QIIVTDSTSD…ELVLLQSKKI (137 aa)) enclose the DegV domain. Hexadecanoate-binding residues include threonine 61 and serine 93.

May bind long-chain fatty acids, such as palmitate, and may play a role in lipid transport or fatty acid metabolism. This is DegV domain-containing 15.5 kDa protein from Staphylococcus aureus.